A 244-amino-acid chain; its full sequence is 3-deoxy-manno-octulosonate cytidylyltransferase (244 aa).

Belongs to the KdsB family.

Its subcellular location is the cytoplasm. It catalyses the reaction 3-deoxy-alpha-D-manno-oct-2-ulosonate + CTP = CMP-3-deoxy-beta-D-manno-octulosonate + diphosphate. The protein operates within nucleotide-sugar biosynthesis; CMP-3-deoxy-D-manno-octulosonate biosynthesis; CMP-3-deoxy-D-manno-octulosonate from 3-deoxy-D-manno-octulosonate and CTP: step 1/1. It functions in the pathway bacterial outer membrane biogenesis; lipopolysaccharide biosynthesis. In terms of biological role, activates KDO (a required 8-carbon sugar) for incorporation into bacterial lipopolysaccharide in Gram-negative bacteria. This chain is 3-deoxy-manno-octulosonate cytidylyltransferase, found in Wolinella succinogenes (strain ATCC 29543 / DSM 1740 / CCUG 13145 / JCM 31913 / LMG 7466 / NCTC 11488 / FDC 602W) (Vibrio succinogenes).